The following is a 301-amino-acid chain: MVTPIAVVGPTASGKSALGIALAHKLDGEVVNVDSMQLYKGMDIGTAKLTVEEREGIAHHQLDVWDVTETASVARFQSDAVADVEDIMSRGKTPILVGGSMLYVQSLVDDWQFPPTDSAVRARFEARLADIGVEALHAELTQLDPEAAAVIESNDPRRTVRALEVIELTGQPFQASQPPKDAPPRWGTRIIGLKTTPEWLNPRIEQRTARMFEQGFVAEVEHLVQQGLIADSTAGRAIGYSQVLAAMAGEMTWEDAFERTVTGTRRYVRRQRSWFNRDHRVSWVDASGDPTAQALEILGLQ.

9–16 contributes to the ATP binding site; that stretch reads GPTASGKS. 11–16 contributes to the substrate binding site; the sequence is TASGKS. Residues 34–37 form an interaction with substrate tRNA region; the sequence is DSMQ.

The protein belongs to the IPP transferase family. Monomer. Mg(2+) serves as cofactor.

The catalysed reaction is adenosine(37) in tRNA + dimethylallyl diphosphate = N(6)-dimethylallyladenosine(37) in tRNA + diphosphate. Its function is as follows. Catalyzes the transfer of a dimethylallyl group onto the adenine at position 37 in tRNAs that read codons beginning with uridine, leading to the formation of N6-(dimethylallyl)adenosine (i(6)A). The polypeptide is tRNA dimethylallyltransferase (Corynebacterium glutamicum (strain ATCC 13032 / DSM 20300 / JCM 1318 / BCRC 11384 / CCUG 27702 / LMG 3730 / NBRC 12168 / NCIMB 10025 / NRRL B-2784 / 534)).